The following is a 371-amino-acid chain: Chaperone protein DnaJ (371 aa).

A J domain is found at 5-69 (EFYDRLGVSK…QKRAAYDQYG (65 aa)). The CR-type zinc finger occupies 127-209 (GAEKEVSYNR…CHGTGHEKKT (83 aa)). Zn(2+) is bound by residues Cys-140, Cys-143, Cys-157, Cys-160, Cys-183, Cys-186, Cys-197, and Cys-200. 4 CXXCXGXG motif repeats span residues 140 to 147 (CHTCSGSG), 157 to 164 (CQKCHGSG), 183 to 190 (CDVCQGSG), and 197 to 204 (CPTCHGTG).

It belongs to the DnaJ family. Homodimer. It depends on Zn(2+) as a cofactor.

It is found in the cytoplasm. In terms of biological role, participates actively in the response to hyperosmotic and heat shock by preventing the aggregation of stress-denatured proteins and by disaggregating proteins, also in an autonomous, DnaK-independent fashion. Unfolded proteins bind initially to DnaJ; upon interaction with the DnaJ-bound protein, DnaK hydrolyzes its bound ATP, resulting in the formation of a stable complex. GrpE releases ADP from DnaK; ATP binding to DnaK triggers the release of the substrate protein, thus completing the reaction cycle. Several rounds of ATP-dependent interactions between DnaJ, DnaK and GrpE are required for fully efficient folding. Also involved, together with DnaK and GrpE, in the DNA replication of plasmids through activation of initiation proteins. The protein is Chaperone protein DnaJ of Streptococcus agalactiae serotype Ia (strain ATCC 27591 / A909 / CDC SS700).